The sequence spans 213 residues: ATP synthase peripheral stalk subunit OSCP, mitochondrial (213 aa).

Residues 1–23 (MAAPATSVLSRQVRSFSTSVVRP) constitute a mitochondrion transit peptide. The short motif at 5–23 (ATSVLSRQVRSFSTSVVRP) is the SIFI-degron element. 3 positions are modified to N6-acetyllysine: lysine 60, lysine 70, and lysine 73. At lysine 90 the chain carries N6-succinyllysine. 2 positions are modified to N6-acetyllysine; alternate: lysine 100 and lysine 158. An N6-succinyllysine; alternate mark is found at lysine 100 and lysine 158. N6-acetyllysine is present on residues lysine 176 and lysine 192. Lysine 199 is modified (N6-succinyllysine).

Belongs to the ATPase delta chain family. As to quaternary structure, component of the ATP synthase complex composed at least of ATP5F1A/subunit alpha, ATP5F1B/subunit beta, ATP5MC1/subunit c (homooctomer), MT-ATP6/subunit a, MT-ATP8/subunit 8, ATP5ME/subunit e, ATP5MF/subunit f, ATP5MG/subunit g, ATP5MK/subunit k, ATP5MJ/subunit j, ATP5F1C/subunit gamma, ATP5F1D/subunit delta, ATP5F1E/subunit epsilon, ATP5PF/subunit F6, ATP5PB/subunit b, ATP5PD/subunit d, ATP5PO/subunit OSCP. ATP synthase complex consists of a soluble F(1) head domain (subunits alpha(3) and beta(3)) - the catalytic core - and a membrane F(0) domain - the membrane proton channel (subunits c, a, 8, e, f, g, k and j). These two domains are linked by a central stalk (subunits gamma, delta, and epsilon) rotating inside the F1 region and a stationary peripheral stalk (subunits F6, b, d, and OSCP). In response to mitochondrial stress, the precursor protein is ubiquitinated by the SIFI complex in the cytoplasm before mitochondrial import, leading to its degradation. Within the SIFI complex, UBR4 initiates ubiquitin chain that are further elongated or branched by KCMF1. Expressed by the principal cells of the epididymis. Detected in flagella of epididymal sperm (at protein level).

Its subcellular location is the mitochondrion. The protein resides in the mitochondrion inner membrane. Its function is as follows. Subunit OSCP, of the mitochondrial membrane ATP synthase complex (F(1)F(0) ATP synthase or Complex V) that produces ATP from ADP in the presence of a proton gradient across the membrane which is generated by electron transport complexes of the respiratory chain. ATP synthase complex consist of a soluble F(1) head domain - the catalytic core - and a membrane F(1) domain - the membrane proton channel. These two domains are linked by a central stalk rotating inside the F(1) region and a stationary peripheral stalk. During catalysis, ATP synthesis in the catalytic domain of F(1) is coupled via a rotary mechanism of the central stalk subunits to proton translocation. In vivo, can only synthesize ATP although its ATP hydrolase activity can be activated artificially in vitro. Part of the complex F(0) domain. Part of the complex F(0) domain and the peripheric stalk, which acts as a stator to hold the catalytic alpha(3)beta(3) subcomplex and subunit a/ATP6 static relative to the rotary elements. The sequence is that of ATP synthase peripheral stalk subunit OSCP, mitochondrial from Rattus norvegicus (Rat).